The primary structure comprises 210 residues: Urease accessory protein UreE (210 aa).

Residues 144–210 (PEGGAYAAGG…GHAHPHSLAR (67 aa)) form a disordered region. The segment covering 156–202 (HGHDHPHHDHGHDHAHAHAHGTEACDHEHSHDHDCGHHHDHGQDYGH) has biased composition (basic and acidic residues).

It belongs to the UreE family.

The protein localises to the cytoplasm. Involved in urease metallocenter assembly. Binds nickel. Probably functions as a nickel donor during metallocenter assembly. In Paracidovorax citrulli (strain AAC00-1) (Acidovorax citrulli), this protein is Urease accessory protein UreE.